The following is a 522-amino-acid chain: Zinc finger protein 892 (522 aa).

Disordered regions lie at residues 1–22 and 96–124; these read MEPEGRGSLFEDSDLLHAGNPK and AASQKHWETIPESKELTPEKDISEEESAP. Residues 100–116 are compositionally biased toward basic and acidic residues; the sequence is KHWETIPESKELTPEKD. 10 C2H2-type zinc fingers span residues 221-243, 249-271, 277-299, 305-327, 333-355, 361-383, 389-411, 417-439, 445-467, and 473-495; these read WKCNECEKAFSYYSAFVLHQRIH, YECNECGKAFSQSIHLTLHQRIH, YECHECGKAFSHRSALIRHHIIH, YECNECGKAFNQSSYLTQHQRIH, YECNECGKAFSQSTFLTQHQVIH, YKCNECGKAFSDRSGLIQHQRTH, YECNECGKAFGYCSALTQHQRTH, YKCNDCAKAFSDRSALIRHQRTH, YKCKDCGKAFSQSSSLTKHQKTH, and YKCKECGKAFSQSSSLSQHQKTH.

This sequence belongs to the krueppel C2H2-type zinc-finger protein family.

Its subcellular location is the nucleus. Its function is as follows. May be involved in transcriptional regulation. The polypeptide is Zinc finger protein 892 (Homo sapiens (Human)).